A 385-amino-acid polypeptide reads, in one-letter code: Cytochrome b (385 aa).

4 helical membrane passes run 32–52, 76–98, 113–133, and 179–199; these read FGSL…TLAM, WLIR…LHIG, AWIL…LGYV, and FFAL…MHLI. 2 residues coordinate heme b: histidine 82 and histidine 96. Positions 183 and 197 each coordinate heme b. Histidine 202 lines the a ubiquinone pocket. 4 helical membrane-spanning segments follow: residues 226 to 246, 290 to 310, 322 to 342, and 349 to 369; these read YLFK…IFVF, LLGV…PKTD, LSKI…QLGA, and FIEF…IIMP.

Belongs to the cytochrome b family. As to quaternary structure, fungal cytochrome b-c1 complex contains 10 subunits; 3 respiratory subunits, 2 core proteins and 5 low-molecular weight proteins. Cytochrome b-c1 complex is a homodimer. Heme b serves as cofactor.

It localises to the mitochondrion inner membrane. Functionally, component of the ubiquinol-cytochrome c reductase complex (complex III or cytochrome b-c1 complex) that is part of the mitochondrial respiratory chain. The b-c1 complex mediates electron transfer from ubiquinol to cytochrome c. Contributes to the generation of a proton gradient across the mitochondrial membrane that is then used for ATP synthesis. This Akanthomyces muscarius (Entomopathogenic fungus) protein is Cytochrome b (cob).